We begin with the raw amino-acid sequence, 180 residues long: Inner membrane-spanning protein YciB (180 aa).

Transmembrane regions (helical) follow at residues Leu-4–Ile-24, Gln-25–Ile-45, Leu-52–Asn-72, Ile-76–Ile-96, Ile-118–Val-138, and Phe-150–Leu-170.

This sequence belongs to the YciB family.

Its subcellular location is the cell inner membrane. In terms of biological role, plays a role in cell envelope biogenesis, maintenance of cell envelope integrity and membrane homeostasis. The sequence is that of Inner membrane-spanning protein YciB from Rickettsia massiliae (strain Mtu5).